The sequence spans 514 residues: UDP-N-acetylmuramyl-tripeptide synthetase (514 aa).

L44 and S46 together coordinate UDP-N-acetyl-alpha-D-muramoyl-L-alanyl-D-glutamate. 129–135 (GTNGKTS) serves as a coordination point for ATP. UDP-N-acetyl-alpha-D-muramoyl-L-alanyl-D-glutamate contacts are provided by residues 171–172 (TT), S198, and R206. An N6-carboxylysine modification is found at K238.

It belongs to the MurCDEF family. MurE subfamily. In terms of processing, carboxylation is probably crucial for Mg(2+) binding and, consequently, for the gamma-phosphate positioning of ATP.

The protein localises to the cytoplasm. Its pathway is cell wall biogenesis; peptidoglycan biosynthesis. Catalyzes the addition of an amino acid to the nucleotide precursor UDP-N-acetylmuramoyl-L-alanyl-D-glutamate (UMAG) in the biosynthesis of bacterial cell-wall peptidoglycan. The sequence is that of UDP-N-acetylmuramyl-tripeptide synthetase from Leifsonia xyli subsp. xyli (strain CTCB07).